We begin with the raw amino-acid sequence, 395 residues long: Phosphoglycerate kinase (395 aa).

Substrate is bound by residues 20-22, Arg-36, 59-62, Arg-120, and Arg-157; these read DFN and HLGR. Residues Lys-208, Gly-296, Glu-327, and 353–356 contribute to the ATP site; that span reads GGDT.

Belongs to the phosphoglycerate kinase family. In terms of assembly, monomer.

The protein resides in the cytoplasm. It catalyses the reaction (2R)-3-phosphoglycerate + ATP = (2R)-3-phospho-glyceroyl phosphate + ADP. It functions in the pathway carbohydrate degradation; glycolysis; pyruvate from D-glyceraldehyde 3-phosphate: step 2/5. In Tropheryma whipplei (strain Twist) (Whipple's bacillus), this protein is Phosphoglycerate kinase.